The primary structure comprises 414 residues: Esterase FrsA (414 aa).

It belongs to the FrsA family.

The catalysed reaction is a carboxylic ester + H2O = an alcohol + a carboxylate + H(+). Catalyzes the hydrolysis of esters. The protein is Esterase FrsA of Salmonella agona (strain SL483).